The primary structure comprises 86 residues: Putative defensin-like protein 211 (86 aa).

Residues 1–19 form the signal peptide; that stretch reads MNTIVLFLTLLILVSSCTS. 3 disulfide bridges follow: C55–C72, C58–C77, and C62–C79.

This sequence belongs to the DEFL family.

Its subcellular location is the secreted. This is Putative defensin-like protein 211 from Arabidopsis thaliana (Mouse-ear cress).